The chain runs to 448 residues: Zinc finger CCCH domain-containing protein 43 (448 aa).

The segment at 1–106 (MVNSEEIADG…GWSENESENV (106 aa)) is disordered. A compositionally biased stretch (basic and acidic residues) spans 24 to 45 (SSHDRSLSDLNHAAEDLSDKLK). Positions 63-79 (VSESNGGLDSNAVVTIN) are enriched in polar residues. A compositionally biased stretch (acidic residues) spans 80-89 (QEEEEEEEDR). C3H1-type zinc fingers lie at residues 110–138 (RPGA…HPLA), 158–186 (KLGL…HTIP), 204–232 (RPGE…HPDP), 346–374 (RPDQ…HPKN), and 392–420 (RPDQ…HSVQ). The interval 424 to 448 (STESSQAIVEPPQVSANGNESDGWN) is disordered. The span at 437–448 (VSANGNESDGWN) shows a compositional bias: polar residues.

It localises to the nucleus. The polypeptide is Zinc finger CCCH domain-containing protein 43 (Arabidopsis thaliana (Mouse-ear cress)).